The primary structure comprises 2379 residues: Serine/threonine-protein kinase MEC1 (2379 aa).

The 546-residue stretch at 1410 to 1955 (LLANKSLETN…LWHISVLCQS (546 aa)) folds into the FAT domain. The region spanning 2060–2363 (FASSYKIFSS…QAETLIQEAT (304 aa)) is the PI3K/PI4K catalytic domain. The segment at 2066-2072 (IFSSLKK) is G-loop. Positions 2232–2240 (GLGDRHCEN) are catalytic loop. The segment at 2252 to 2276 (HVDFDCLFEKGENLPVPEIVPFRLT) is activation loop. Residues 2347 to 2379 (LLLSVSGQAETLIQEATSTENLSKMYIGWLPFW) enclose the FATC domain.

It belongs to the PI3/PI4-kinase family. ATM subfamily.

The protein localises to the nucleus. It catalyses the reaction L-seryl-[protein] + ATP = O-phospho-L-seryl-[protein] + ADP + H(+). It carries out the reaction L-threonyl-[protein] + ATP = O-phospho-L-threonyl-[protein] + ADP + H(+). In terms of biological role, serine/threonine protein kinase which activates checkpoint signaling upon genotoxic stresses such as ionizing radiation (IR), ultraviolet light (UV), or DNA replication stalling, thereby acting as a DNA damage sensor. Recognizes the substrate consensus sequence [ST]-Q. Recruited to DNA lesions in order to initiate the DNA repair by homologous recombination. Phosphorylates histone H2A to form H2AS128ph (gamma-H2A) at sites of DNA damage, also involved in the regulation of DNA damage response mechanism. Required for cell growth and meiotic recombination. The sequence is that of Serine/threonine-protein kinase MEC1 (MEC1) from Candida glabrata (strain ATCC 2001 / BCRC 20586 / JCM 3761 / NBRC 0622 / NRRL Y-65 / CBS 138) (Yeast).